The primary structure comprises 517 residues: Dermokine (517 aa).

An N-terminal signal peptide occupies residues 1–21 (MKLQGSLACLLLALCLGGGAA). Disordered regions lie at residues 51–83 (VGQG…MGSR) and 123–364 (AGSW…IQKE). Gly residues-rich tracts occupy residues 127-145 (GTSG…GVQG) and 167-176 (GSVGQGGNGG). Polar residues predominate over residues 197-206 (RGNNQNSGCT). Positions 212–235 (GSHESFSNSGGSSNDGSRGSQGSH) are enriched in low complexity. Gly residues predominate over residues 236 to 250 (GSNGQGSSGRGGGQG). Positions 251–289 (NSDNNGSSSSSSGSNSGNSNSGNSGNSNSGNSGNSGSGS) are enriched in low complexity. Composition is skewed to gly residues over residues 308–332 (GSRG…GGGN) and 347–358 (GGSGSQGHGSNG).

Belongs to the dermokine family. As to quaternary structure, homooligomer. Seems to be able to homodimerize and homotrimerize. O-glycosylated. As to expression, highly expressed in stratified epithelia; such as the skin, tongue, esophagus, forestomach and vagina. Also found in lung, trachea and urinary bladder.

Its subcellular location is the secreted. May act as a soluble regulator of keratinocyte differentiation. In Mus musculus (Mouse), this protein is Dermokine (Dmkn).